The primary structure comprises 292 residues: ATP synthase gamma chain (292 aa).

This sequence belongs to the ATPase gamma chain family. In terms of assembly, F-type ATPases have 2 components, CF(1) - the catalytic core - and CF(0) - the membrane proton channel. CF(1) has five subunits: alpha(3), beta(3), gamma(1), delta(1), epsilon(1). CF(0) has three main subunits: a, b and c.

It is found in the cell membrane. Functionally, produces ATP from ADP in the presence of a proton gradient across the membrane. The gamma chain is believed to be important in regulating ATPase activity and the flow of protons through the CF(0) complex. In Streptococcus pneumoniae (strain JJA), this protein is ATP synthase gamma chain.